A 449-amino-acid polypeptide reads, in one-letter code: 23S rRNA (uracil(1939)-C(5))-methyltransferase RlmD (449 aa).

The TRAM domain maps to 12–70 (SKQLSAKQSFSVHQLDHLGAGIAQHQGKVVFIPGALPSETVQAQLTEQKKNYARAKLIK). Residues C83, C89, C92, and C170 each contribute to the [4Fe-4S] cluster site. Residues Q282, F311, N316, E332, D359, and D379 each contribute to the S-adenosyl-L-methionine site. The active-site Nucleophile is the C405.

This sequence belongs to the class I-like SAM-binding methyltransferase superfamily. RNA M5U methyltransferase family. RlmD subfamily.

It catalyses the reaction uridine(1939) in 23S rRNA + S-adenosyl-L-methionine = 5-methyluridine(1939) in 23S rRNA + S-adenosyl-L-homocysteine + H(+). Catalyzes the formation of 5-methyl-uridine at position 1939 (m5U1939) in 23S rRNA. This chain is 23S rRNA (uracil(1939)-C(5))-methyltransferase RlmD, found in Shewanella sp. (strain MR-4).